The following is a 286-amino-acid chain: Pantothenate synthetase (286 aa).

Position 30–37 (30–37 (MGNLHAGH)) interacts with ATP. Catalysis depends on His37, which acts as the Proton donor. Gln61 lines the (R)-pantoate pocket. Gln61 lines the beta-alanine pocket. 149–152 (GEKD) provides a ligand contact to ATP. Gln155 contacts (R)-pantoate. ATP is bound by residues Val178 and 186–189 (MSSR).

It belongs to the pantothenate synthetase family. Homodimer.

It localises to the cytoplasm. The enzyme catalyses (R)-pantoate + beta-alanine + ATP = (R)-pantothenate + AMP + diphosphate + H(+). The protein operates within cofactor biosynthesis; (R)-pantothenate biosynthesis; (R)-pantothenate from (R)-pantoate and beta-alanine: step 1/1. Its function is as follows. Catalyzes the condensation of pantoate with beta-alanine in an ATP-dependent reaction via a pantoyl-adenylate intermediate. This chain is Pantothenate synthetase, found in Thioalkalivibrio sulfidiphilus (strain HL-EbGR7).